Consider the following 185-residue polypeptide: Peptidyl-tRNA hydrolase (185 aa).

Position 14 (Tyr14) interacts with tRNA. Residue His19 is the Proton acceptor of the active site. The tRNA site is built by Phe64, Asn66, and Asn112.

Belongs to the PTH family. In terms of assembly, monomer.

It is found in the cytoplasm. It carries out the reaction an N-acyl-L-alpha-aminoacyl-tRNA + H2O = an N-acyl-L-amino acid + a tRNA + H(+). Functionally, hydrolyzes ribosome-free peptidyl-tRNAs (with 1 or more amino acids incorporated), which drop off the ribosome during protein synthesis, or as a result of ribosome stalling. In terms of biological role, catalyzes the release of premature peptidyl moieties from peptidyl-tRNA molecules trapped in stalled 50S ribosomal subunits, and thus maintains levels of free tRNAs and 50S ribosomes. The sequence is that of Peptidyl-tRNA hydrolase from Latilactobacillus sakei subsp. sakei (strain 23K) (Lactobacillus sakei subsp. sakei).